The primary structure comprises 255 residues: Phycoerythrobilin:ferredoxin oxidoreductase (255 aa).

The protein belongs to the HY2 family.

It carries out the reaction (3Z)-phycoerythrobilin + oxidized 2[4Fe-4S]-[ferredoxin] = 15,16-dihydrobiliverdin + reduced 2[4Fe-4S]-[ferredoxin] + 2 H(+). In terms of biological role, catalyzes the two-electron reduction of the C2 and C3(1) diene system of 15,16-dihydrobiliverdin. This is Phycoerythrobilin:ferredoxin oxidoreductase (pebB) from Nostoc punctiforme (strain ATCC 29133 / PCC 73102).